A 370-amino-acid polypeptide reads, in one-letter code: Putative FBD-associated F-box protein At1g50980 (370 aa).

In terms of domain architecture, F-box spans Ile-31–Ser-77. An FBD domain is found at Leu-292–Thr-343.

In Arabidopsis thaliana (Mouse-ear cress), this protein is Putative FBD-associated F-box protein At1g50980.